The sequence spans 437 residues: Adenosylhomocysteinase (437 aa).

Thr-58, Asp-133, and Glu-158 together coordinate substrate. Residue 159–161 (TTT) participates in NAD(+) binding. The substrate site is built by Lys-188 and Asp-192. NAD(+)-binding positions include Asn-193, 224–229 (GDVGKG), Glu-245, 301–303 (VGH), and Asn-348.

This sequence belongs to the adenosylhomocysteinase family. Homotetramer. It depends on NAD(+) as a cofactor.

It catalyses the reaction S-adenosyl-L-homocysteine + H2O = L-homocysteine + adenosine. It functions in the pathway amino-acid biosynthesis; L-homocysteine biosynthesis; L-homocysteine from S-adenosyl-L-homocysteine: step 1/1. Adenosylhomocysteine is a competitive inhibitor of S-adenosyl-L-methionine-dependent methyl transferase reactions; therefore adenosylhomocysteinase may play a key role in the control of methylations via regulation of the intracellular concentration of adenosylhomocysteine. The protein is Adenosylhomocysteinase (ahcy-1) of Caenorhabditis elegans.